Consider the following 340-residue polypeptide: UPF0324 membrane protein OB3406 (340 aa).

The next 9 helical transmembrane spans lie at 12–31 (SFYT…GVLC), 36–58 (LDIM…TIGL), 94–116 (GLHA…YSLA), 126–148 (SILT…APLV), 155–177 (TAVS…TMMY), 215–237 (IAIV…IGIY), 257–276 (IPWF…IGFL), 281–303 (VNLL…GLNV), and 315–337 (VFFA…IYVM).

Belongs to the UPF0324 family.

It localises to the cell membrane. The sequence is that of UPF0324 membrane protein OB3406 from Oceanobacillus iheyensis (strain DSM 14371 / CIP 107618 / JCM 11309 / KCTC 3954 / HTE831).